The sequence spans 491 residues: NADH-quinone oxidoreductase subunit N 1 (491 aa).

The next 14 helical transmembrane spans lie at 15–35 (VLGM…VDMF), 41–61 (VLLT…ALDY), 77–97 (FGVL…LIAF), 105–125 (LSQG…LFLV), 130–150 (LVTI…LTGF), 165–185 (LLLG…IYGM), 211–231 (PILL…VSMF), 247–269 (PVTA…RFLN), 279–299 (WQLL…IVAV), 307–327 (MLAY…LAAS), 333–353 (AFTV…AVLI), 378–398 (LALA…TAGF), 416–436 (LAII…RVIV), and 459–479 (LGVI…NIFT).

This sequence belongs to the complex I subunit 2 family. In terms of assembly, NDH-1 is composed of 14 different subunits. Subunits NuoA, H, J, K, L, M, N constitute the membrane sector of the complex.

The protein localises to the cell membrane. It catalyses the reaction a quinone + NADH + 5 H(+)(in) = a quinol + NAD(+) + 4 H(+)(out). Its function is as follows. NDH-1 shuttles electrons from NADH, via FMN and iron-sulfur (Fe-S) centers, to quinones in the respiratory chain. The immediate electron acceptor for the enzyme in this species is believed to be ubiquinone. Couples the redox reaction to proton translocation (for every two electrons transferred, four hydrogen ions are translocated across the cytoplasmic membrane), and thus conserves the redox energy in a proton gradient. This chain is NADH-quinone oxidoreductase subunit N 1, found in Herpetosiphon aurantiacus (strain ATCC 23779 / DSM 785 / 114-95).